The chain runs to 264 residues: UPF0162 protein PM0557 (264 aa).

The protein belongs to the UPF0162 family.

The polypeptide is UPF0162 protein PM0557 (Pasteurella multocida (strain Pm70)).